The following is a 510-amino-acid chain: 2,3-bisphosphoglycerate-independent phosphoglycerate mutase (510 aa).

2 residues coordinate Mn(2+): Asp13 and Ser63. Ser63 acts as the Phosphoserine intermediate in catalysis. Residues His124, Arg154–Asp155, Arg186, Arg192, Arg262–Arg265, and Lys334 contribute to the substrate site. Mn(2+) is bound by residues Asp401, His405, Asp442, His443, and His461.

Belongs to the BPG-independent phosphoglycerate mutase family. As to quaternary structure, monomer. The cofactor is Mn(2+).

It carries out the reaction (2R)-2-phosphoglycerate = (2R)-3-phosphoglycerate. It participates in carbohydrate degradation; glycolysis; pyruvate from D-glyceraldehyde 3-phosphate: step 3/5. Catalyzes the interconversion of 2-phosphoglycerate and 3-phosphoglycerate. The sequence is that of 2,3-bisphosphoglycerate-independent phosphoglycerate mutase from Vibrio parahaemolyticus serotype O3:K6 (strain RIMD 2210633).